We begin with the raw amino-acid sequence, 737 residues long: Dipeptidyl peptidase 3 (737 aa).

Ala-2 is modified (N-acetylalanine). His-450 contributes to the Zn(2+) binding site. Glu-451 is an active-site residue. Residues His-455 and Glu-508 each contribute to the Zn(2+) site.

This sequence belongs to the peptidase M49 family. Zn(2+) serves as cofactor. As to expression, detected in placenta (at protein level). Detected in erythrocytes (at protein level).

Its subcellular location is the cytoplasm. The protein resides in the cytosol. It carries out the reaction Release of an N-terminal dipeptide from a peptide comprising four or more residues, with broad specificity. Also acts on dipeptidyl 2-naphthylamides.. Activated by Co(2+). Inhibited by EDTA and o-phenanthroline (in vitro). Cleaves and degrades bioactive peptides, including angiotensin, Leu-enkephalin and Met-enkephalin. Also cleaves Arg-Arg-beta-naphthylamide (in vitro). This is Dipeptidyl peptidase 3 (DPP3) from Homo sapiens (Human).